Consider the following 256-residue polypeptide: Thioredoxin-dependent peroxide reductase, mitochondrial (256 aa).

The N-terminal 61 residues, 1–61 (MAAAVGRLLR…KLFSTSSSYH (61 aa)), are a transit peptide targeting the mitochondrion. Positions 63-221 (PAVTQHAPYF…TLRLVKAFQY (159 aa)) constitute a Thioredoxin domain. Position 83 is an N6-succinyllysine (K83). Position 91 is an N6-acetyllysine; alternate (K91). K91 is subject to N6-succinyllysine; alternate. C108 serves as the catalytic Cysteine sulfenic acid (-SOH) intermediate. Phosphothreonine is present on T146.

It belongs to the peroxiredoxin family. AhpC/Prx1 subfamily. In terms of assembly, homodimer; disulfide-linked, upon oxidation. 6 homodimers assemble to form a ring-like dodecamer. Interacts with NEK6. Interacts with LRRK2. Interacts with MAP3K13. Interacts with RPS6KC1 (via PX domain). Phosphorylated by LRRK2; phosphorylation reduces perodixase activity. Post-translationally, the enzyme can be inactivated by further oxidation of the cysteine sulfenic acid (C(P)-SOH) to sulphinic acid (C(P)-SO2H) and sulphonic acid (C(P)-SO3H) instead of its condensation to a disulfide bond. In terms of processing, S-palmitoylated.

The protein resides in the mitochondrion. It localises to the cytoplasm. It is found in the early endosome. It catalyses the reaction a hydroperoxide + [thioredoxin]-dithiol = an alcohol + [thioredoxin]-disulfide + H2O. Functionally, thiol-specific peroxidase that catalyzes the reduction of hydrogen peroxide and organic hydroperoxides to water and alcohols, respectively. Plays a role in cell protection against oxidative stress by detoxifying peroxides. Acts synergistically with MAP3K13 to regulate the activation of NF-kappa-B in the cytosol. Required for the maintenance of physical strength. The protein is Thioredoxin-dependent peroxide reductase, mitochondrial (PRDX3) of Pongo abelii (Sumatran orangutan).